Consider the following 171-residue polypeptide: Adenine phosphoribosyltransferase (171 aa).

This sequence belongs to the purine/pyrimidine phosphoribosyltransferase family. In terms of assembly, homodimer.

It is found in the cytoplasm. The catalysed reaction is AMP + diphosphate = 5-phospho-alpha-D-ribose 1-diphosphate + adenine. It functions in the pathway purine metabolism; AMP biosynthesis via salvage pathway; AMP from adenine: step 1/1. Functionally, catalyzes a salvage reaction resulting in the formation of AMP, that is energically less costly than de novo synthesis. This chain is Adenine phosphoribosyltransferase, found in Christiangramia forsetii (strain DSM 17595 / CGMCC 1.15422 / KT0803) (Gramella forsetii).